The following is a 199-amino-acid chain: Recombination protein RecR (199 aa).

Residues 57–72 form a C4-type zinc finger; that stretch reads CQKCRTFTEQSLCPIC. The 96-residue stretch at 81–176 folds into the Toprim domain; the sequence is DTLCVVETPA…AVSRIAHGVP (96 aa).

The protein belongs to the RecR family.

May play a role in DNA repair. It seems to be involved in an RecBC-independent recombinational process of DNA repair. It may act with RecF and RecO. The protein is Recombination protein RecR of Shewanella amazonensis (strain ATCC BAA-1098 / SB2B).